We begin with the raw amino-acid sequence, 110 residues long: UPF0122 protein SaurJH9_1295 (110 aa).

Belongs to the UPF0122 family.

In terms of biological role, might take part in the signal recognition particle (SRP) pathway. This is inferred from the conservation of its genetic proximity to ftsY/ffh. May be a regulatory protein. The chain is UPF0122 protein SaurJH9_1295 from Staphylococcus aureus (strain JH9).